Consider the following 338-residue polypeptide: Glycerol-3-phosphate dehydrogenase [NAD(P)+] (338 aa).

NADPH-binding residues include serine 13, tryptophan 14, and lysine 108. Sn-glycerol 3-phosphate is bound by residues lysine 108, glycine 139, and serine 141. Alanine 143 lines the NADPH pocket. Lysine 194, aspartate 247, serine 257, arginine 258, and asparagine 259 together coordinate sn-glycerol 3-phosphate. Catalysis depends on lysine 194, which acts as the Proton acceptor. Residue arginine 258 coordinates NADPH. Valine 282 and glutamate 284 together coordinate NADPH.

It belongs to the NAD-dependent glycerol-3-phosphate dehydrogenase family.

Its subcellular location is the cytoplasm. The enzyme catalyses sn-glycerol 3-phosphate + NAD(+) = dihydroxyacetone phosphate + NADH + H(+). It carries out the reaction sn-glycerol 3-phosphate + NADP(+) = dihydroxyacetone phosphate + NADPH + H(+). It functions in the pathway membrane lipid metabolism; glycerophospholipid metabolism. Functionally, catalyzes the reduction of the glycolytic intermediate dihydroxyacetone phosphate (DHAP) to sn-glycerol 3-phosphate (G3P), the key precursor for phospholipid synthesis. This chain is Glycerol-3-phosphate dehydrogenase [NAD(P)+], found in Streptococcus pyogenes serotype M2 (strain MGAS10270).